Reading from the N-terminus, the 432-residue chain is Glutamyl-tRNA reductase (432 aa).

Residues 50–53 (TCNR), Ser110, 115–117 (ETQ), and Gln121 contribute to the substrate site. Cys51 acts as the Nucleophile in catalysis. 190-195 (GAGEMG) is a binding site for NADP(+).

The protein belongs to the glutamyl-tRNA reductase family. As to quaternary structure, homodimer.

The enzyme catalyses (S)-4-amino-5-oxopentanoate + tRNA(Glu) + NADP(+) = L-glutamyl-tRNA(Glu) + NADPH + H(+). It functions in the pathway porphyrin-containing compound metabolism; protoporphyrin-IX biosynthesis; 5-aminolevulinate from L-glutamyl-tRNA(Glu): step 1/2. Functionally, catalyzes the NADPH-dependent reduction of glutamyl-tRNA(Glu) to glutamate 1-semialdehyde (GSA). The chain is Glutamyl-tRNA reductase from Nitratiruptor sp. (strain SB155-2).